Reading from the N-terminus, the 335-residue chain is DNA-directed RNA polymerase RPB7 homolog (335 aa).

It belongs to the Asfivirus DNA-directed RNA polymerase RPB7 homolog family. In terms of assembly, part of the viral DNA-directed RNA polymerase that consists of 8 polII-like subunits (RPB1, RPB2, RPB3, RPB5, RPB6, RPB7, RPB9, RPB10), a capping enzyme and a termination factor.

The protein resides in the host cytoplasm. It localises to the virion. Functionally, component of the DNA-directed RNA polymerase (RNAP) that catalyzes the transcription in the cytoplasm of viral DNA into RNA using the four ribonucleoside triphosphates as substrates. The protein is DNA-directed RNA polymerase RPB7 homolog of African swine fever virus (isolate Pig/Kenya/KEN-50/1950) (ASFV).